A 422-amino-acid chain; its full sequence is Enolase (422 aa).

Residue Q161 coordinates (2R)-2-phosphoglycerate. E203 serves as the catalytic Proton donor. The Mg(2+) site is built by D240, E283, and D310. (2R)-2-phosphoglycerate contacts are provided by K335, R364, S365, and K386. The active-site Proton acceptor is the K335.

It belongs to the enolase family. Mg(2+) is required as a cofactor.

It is found in the cytoplasm. It localises to the secreted. The protein resides in the cell surface. It catalyses the reaction (2R)-2-phosphoglycerate = phosphoenolpyruvate + H2O. It functions in the pathway carbohydrate degradation; glycolysis; pyruvate from D-glyceraldehyde 3-phosphate: step 4/5. In terms of biological role, catalyzes the reversible conversion of 2-phosphoglycerate (2-PG) into phosphoenolpyruvate (PEP). It is essential for the degradation of carbohydrates via glycolysis. The protein is Enolase of Deinococcus deserti (strain DSM 17065 / CIP 109153 / LMG 22923 / VCD115).